The chain runs to 358 residues: Methionine aminopeptidase 2 (358 aa).

A substrate-binding site is contributed by His109. Residues Asp130, Asp141, and His210 each coordinate a divalent metal cation. Residue His218 coordinates substrate. Residues Glu243 and Glu339 each coordinate a divalent metal cation.

This sequence belongs to the peptidase M24A family. Methionine aminopeptidase eukaryotic type 2 subfamily. Co(2+) serves as cofactor. The cofactor is Zn(2+). Mn(2+) is required as a cofactor. Requires Fe(2+) as cofactor.

The protein localises to the cytoplasm. The catalysed reaction is Release of N-terminal amino acids, preferentially methionine, from peptides and arylamides.. Its function is as follows. Cotranslationally removes the N-terminal methionine from nascent proteins. The N-terminal methionine is often cleaved when the second residue in the primary sequence is small and uncharged (Met-Ala-, Cys, Gly, Pro, Ser, Thr, or Val). This chain is Methionine aminopeptidase 2, found in Encephalitozoon cuniculi (strain GB-M1) (Microsporidian parasite).